Reading from the N-terminus, the 728-residue chain is Ferric reduction oxidase 8, mitochondrial (728 aa).

The N-terminal 24 residues, 1–24, are a transit peptide targeting the mitochondrion; it reads MAKVLTLLVLRLLMNLLLIGWISL. The next 5 membrane-spanning stretches (helical) occupy residues 56–74, 104–127, 194–217, 269–293, and 316–336; these read FAVF…LIYL, IGIV…WNFY, YHVW…LFIW, THHL…YWVL, and ILSA…KDPM. The 123-residue stretch at 159 to 281 folds into the Ferric oxidoreductase domain; sequence FGLLAEACLS…LYIVFLVAFL (123 aa). Heme is bound by residues His-195, His-209, His-270, and His-283. Residues 300–418 form the FAD-binding FR-type domain; sequence GLDKILRIVQ…EGPYGPASVD (119 aa). Residue 358-361 participates in FAD binding; it reads HPFS. Position 410–413 (410–413) interacts with NAD(+); it reads GPYG. The next 2 membrane-spanning stretches (helical) occupy residues 537–559 and 595–616; these read FRWL…IGLS and DLII…ATIL.

Belongs to the ferric reductase (FRE) family. Requires FAD as cofactor. In terms of tissue distribution, expressed in shoots. Detected in roots, pedicels, flowers, siliques and leaf veins.

Its subcellular location is the mitochondrion membrane. It catalyses the reaction 2 a Fe(II)-siderophore + NAD(+) + H(+) = 2 a Fe(III)-siderophore + NADH. In terms of biological role, ferric chelate reductase probably involved in iron reduction in leaf veins for transport. May participate in the transport of electrons to a Fe(3+) ion via FAD and heme intermediates. The protein is Ferric reduction oxidase 8, mitochondrial (FRO8) of Arabidopsis thaliana (Mouse-ear cress).